A 1203-amino-acid polypeptide reads, in one-letter code: Metabotropic glutamate receptor 5 (1203 aa).

An N-terminal signal peptide occupies residues 1 to 18 (MVLLLILSVLLLKEDVRG). Topologically, residues 19–579 (SAQSSERRVV…QYLRWGDPEP (561 aa)) are extracellular. Cys57 and Cys99 form a disulfide bridge. Tyr64 serves as a coordination point for L-glutamate. A glycan (N-linked (GlcNAc...) asparagine) is linked at Asn88. Residues Ser151 and 172–174 (SAT) each bind L-glutamate. A glycan (N-linked (GlcNAc...) asparagine) is linked at Asn209. Tyr222 is an L-glutamate binding site. Disulfide bonds link Cys240–Cys529, Cys275–Cys277, Cys364–Cys380, Cys418–Cys425, Cys510–Cys530, Cys514–Cys533, Cys536–Cys548, and Cys551–Cys564. Asp304 contacts L-glutamate. Asn377 and Asn381 each carry an N-linked (GlcNAc...) asparagine glycan. Lys395 is an L-glutamate binding site. Asn444 carries an N-linked (GlcNAc...) asparagine glycan. A helical membrane pass occupies residues 580 to 602 (IAAVVFACLGLLATLFVTVIFII). The Cytoplasmic portion of the chain corresponds to 603-612 (YRDTPVVKSS). Residues 613–635 (SRELCYIILAGICLGYLCTFCLI) form a helical membrane-spanning segment. Over 636–643 (AKPKQIYC) the chain is Extracellular. A disulfide bond links Cys643 and Cys732. Residues 644–666 (YLQRIGIGLSPAMSYSALVTKTN) form a helical membrane-spanning segment. The Cytoplasmic portion of the chain corresponds to 667 to 692 (RIARILAGSKKKICTKKPRFMSACAQ). The chain crosses the membrane as a helical span at residues 693–713 (LVIAFILICIQLGIIVALFIM). Residues 714–736 (EPPDIMHDYPSIREVYLICNTTN) lie on the Extracellular side of the membrane. A glycan (N-linked (GlcNAc...) asparagine) is linked at Asn733. Residues 737–758 (LGVVTPLGYNGLLILSCTFYAF) traverse the membrane as a helical segment. Residues 759–771 (KTRNVPANFNEAK) are Cytoplasmic-facing. Residues 772–794 (YIAFTMYTTCIIWLAFVPIYFGS) form a helical membrane-spanning segment. Residues 795–797 (NYK) are Extracellular-facing. Residues 798-819 (IITMCFSVSLSATVALGCMFVP) traverse the membrane as a helical segment. Topologically, residues 820–1203 (KVYIILAKPE…RDYTQSSSSL (384 aa)) are cytoplasmic. Ser860 is subject to Phosphoserine. Position 868 is an omega-N-methylarginine (Arg868). 2 disordered regions span residues 892–1054 (FTPK…GSLM) and 1120–1182 (TGGA…ALCI). Positions 905 to 920 (TMSSSNGKSVTWAQNE) are enriched in polar residues. Position 924 is an omega-N-methylarginine (Arg924). Positions 960-977 (QGAGAGGGSGPGAAGAGS) are enriched in gly residues. Residues 1007-1019 (PAAARPRSPSPIS) are compositionally biased toward low complexity. Phosphoserine occurs at positions 1014 and 1016. Polar residues-rich tracts occupy residues 1039–1054 (HSET…GSLM) and 1165–1176 (DSGSTTPNSPVS).

Belongs to the G-protein coupled receptor 3 family. As to quaternary structure, the PPXXF motif binds HOMER1, HOMER2 and HOMER3. Interacts with RYR1, RYR2, ITPR1, SHANK1 and SHANK3. Interacts with SIAH1 and TAMALIN. Interacts with NCDN. Interacts with NECAB2. Interacts with CAMK2A.

The protein localises to the cell membrane. Its function is as follows. G-protein coupled receptor for glutamate. Ligand binding causes a conformation change that triggers signaling via guanine nucleotide-binding proteins (G proteins) and modulates the activity of down-stream effectors. Signaling activates a phosphatidylinositol-calcium second messenger system and generates a calcium-activated chloride current. Plays an important role in the regulation of synaptic plasticity and the modulation of the neural network activity. This is Metabotropic glutamate receptor 5 (Grm5) from Mus musculus (Mouse).